Reading from the N-terminus, the 211-residue chain is MDKKRNISMAVIKRLPKYHRYLEELLRNEVDRISSKELSKKIGFTASQIRQDFNCFGDFGQQGYGYNVKELHAQISNILGLTKEYRCIILGGGNIGQAIANYNKFEKLGFRLEAIFDINPKLVGLKIRDIEIKDIDTLEDYLKENNVDVGIICVPSRSAQKVCDILTRNNVKGIWNFAPVDLKVPEGVFTENVHLSENLLTLSYLMNEQEE.

Positions 17 to 56 (KYHRYLEELLRNEVDRISSKELSKKIGFTASQIRQDFNCF) form a DNA-binding region, H-T-H motif. 91-96 (GGGNIG) serves as a coordination point for NAD(+).

This sequence belongs to the transcriptional regulatory Rex family. In terms of assembly, homodimer.

Its subcellular location is the cytoplasm. Modulates transcription in response to changes in cellular NADH/NAD(+) redox state. The sequence is that of Redox-sensing transcriptional repressor Rex from Clostridium tetani (strain Massachusetts / E88).